Consider the following 574-residue polypeptide: 5'-nucleotidase (574 aa).

A signal peptide spans 1-26 (MCPRAARAPATLLLALGAVLWPAAGA). Zn(2+)-binding residues include Asp-36 and His-38. Cysteines 51 and 57 form a disulfide. Asn-53 carries N-linked (GlcNAc...) asparagine glycosylation. Zn(2+) is bound by residues Asp-85, Asn-117, His-220, and His-243. N-linked (GlcNAc...) asparagine glycans are attached at residues Asn-311 and Asn-333. Intrachain disulfides connect Cys-353-Cys-358 and Cys-365-Cys-387. Arg-354 is a binding site for AMP. Position 354 (Arg-354) interacts with IMP. Positions 390 and 395 each coordinate AMP. 2 residues coordinate IMP: Asn-390 and Arg-395. Asn-403 carries N-linked (GlcNAc...) asparagine glycosylation. Phe-417 is an AMP binding site. IMP is bound at residue Phe-417. Residues Cys-476 and Cys-479 are joined by a disulfide bond. AMP is bound by residues Phe-500 and Asp-506. Residues Phe-500 and Asp-506 each coordinate IMP. Ser-549 is lipidated: GPI-anchor amidated serine. Residues 550–574 (TGSHCHGSFSLIFLSLWAVIFVLYQ) constitute a propeptide, removed in mature form.

This sequence belongs to the 5'-nucleotidase family. Homodimer. Zn(2+) is required as a cofactor.

Its subcellular location is the cell membrane. It catalyses the reaction a ribonucleoside 5'-phosphate + H2O = a ribonucleoside + phosphate. The catalysed reaction is a 2'-deoxyribonucleoside 5'-phosphate + H2O = a 2'-deoxyribonucleoside + phosphate. The enzyme catalyses dTMP + H2O = thymidine + phosphate. It carries out the reaction CMP + H2O = cytidine + phosphate. It catalyses the reaction IMP + H2O = inosine + phosphate. The catalysed reaction is AMP + H2O = adenosine + phosphate. The enzyme catalyses GMP + H2O = guanosine + phosphate. It carries out the reaction UMP + H2O = uridine + phosphate. It catalyses the reaction dAMP + H2O = 2'-deoxyadenosine + phosphate. The catalysed reaction is dCMP + H2O = 2'-deoxycytidine + phosphate. Its activity is regulated as follows. Inhibited by adenosine 5'-(alpha,beta-methylene)-diphosphate (AMPCP). Its function is as follows. Catalyzes the hydrolysis of nucleotide monophosphates, releasing inorganic phosphate and the corresponding nucleoside, with AMP being the preferred substrate. Shows a preference for ribonucleotide monophosphates over their equivalent deoxyribose forms. Other substrates include IMP, UMP, GMP, CMP, dAMP, dCMP, dTMP, NAD and NMN. The chain is 5'-nucleotidase (NT5E) from Homo sapiens (Human).